Reading from the N-terminus, the 1044-residue chain is Multiple epidermal growth factor-like domains protein 11 (1044 aa).

An N-terminal signal peptide occupies residues 1 to 19; sequence MVLSLTGLIAFSFLQATLA. Residues 20–848 lie on the Extracellular side of the membrane; it reads LNPEDPNVCS…SPALGAERHS (829 aa). Residues 24 to 101 enclose the EMI domain; the sequence is DPNVCSHWES…YYESGDFCIP (78 aa). Cystine bridges form between Cys28–Cys89, Cys54–Cys63, Cys88–Cys99, Cys103–Cys118, Cys120–Cys129, Cys146–Cys154, Cys148–Cys161, Cys163–Cys172, Cys185–Cys197, Cys191–Cys204, Cys206–Cys215, Cys228–Cys240, Cys234–Cys247, and Cys249–Cys258. 9 consecutive EGF-like domains span residues 95 to 130, 143 to 173, 181 to 216, 224 to 259, 267 to 302, 310 to 345, 399 to 434, 442 to 477, and 490 to 520; these read SGDF…PDCS, SNRC…WRCE, HGKG…VYCE, HGAH…AVCA, FGQN…DRCQ, FGFQ…PRCQ, YGDG…EVCA, YGPN…LDCT, and NESC…DTCE. N-linked (GlcNAc...) asparagine glycosylation occurs at Asn270. 15 disulfide bridges follow: Cys271-Cys283, Cys277-Cys290, Cys292-Cys301, Cys314-Cys326, Cys320-Cys333, Cys335-Cys344, Cys403-Cys415, Cys409-Cys422, Cys424-Cys433, Cys446-Cys458, Cys452-Cys465, Cys467-Cys476, Cys493-Cys501, Cys495-Cys508, and Cys510-Cys519. Asn531 is a glycosylation site (N-linked (GlcNAc...) asparagine). 5 EGF-like domains span residues 571–606, 659–694, 707–737, 750–780, and 788–823; these read WGPN…PLCQ, FGQD…KDCS, FHAC…LFCT, GRVC…QHCE, and FGYG…IRCD. Cystine bridges form between Cys575–Cys587, Cys581–Cys594, Cys596–Cys605, Cys663–Cys675, Cys669–Cys682, Cys684–Cys693, Cys710–Cys718, Cys712–Cys725, Cys727–Cys736, Cys753–Cys761, Cys755–Cys768, Cys770–Cys779, Cys792–Cys804, Cys798–Cys811, and Cys813–Cys822. Residues 849–869 form a helical membrane-spanning segment; sequence VGAVTGIMLLLFLIVVLLGLF. The Cytoplasmic segment spans residues 870–1044; sequence AWHRRRQKEK…ANGPSQDKQS (175 aa). The interval 1023-1044 is disordered; the sequence is GHYDLLPVRQSPANGPSQDKQS. A compositionally biased stretch (polar residues) spans 1033–1044; the sequence is SPANGPSQDKQS.

Belongs to the MEGF family. As to quaternary structure, homomer. Does not interact with MEGF10.

It is found in the cell membrane. It localises to the basolateral cell membrane. Functionally, may regulate the mosaic spacing of specific neuron subtypes in the retina through homotypic retinal neuron repulsion. Mosaics provide a mechanism to distribute each cell type evenly across the retina, ensuring that all parts of the visual field have access to a full set of processing elements. This Homo sapiens (Human) protein is Multiple epidermal growth factor-like domains protein 11 (MEGF11).